The primary structure comprises 205 residues: Cbp/p300-interacting transactivator 3 (205 aa).

The protein belongs to the CITED family.

It localises to the nucleus. Functionally, acts as a transcriptional coactivator. Enhances estrogen-dependent transactivation mediated by estrogen receptors. In Gallus gallus (Chicken), this protein is Cbp/p300-interacting transactivator 3 (CITED3).